A 448-amino-acid polypeptide reads, in one-letter code: MNMLAPAAKNAFTPASPDRPAYQSGFGNEFATEALPGALPHGQNSPQQAPYGLYAEQLSGTAFTAPRAHNRRAWLYRIRPAAVHLPFEPIAQDRFHSDFHAVPASPNQLRWDPLPAPAAGTDFIDGIVTFAGNGGPDAQTGCGIHLYAANASMTGRFFYNADGELLIVPQQGRLRLLTELGVLDVEPLEIAVIPRGVRFRVELPDGEARGYLCENFGAIFRLPDLGVIGSNGLANPRDFLTPHAWYEDREGDFELVAKFHGNLWRARIGHSPLDVVAWHGNYAPYKYDLRLFNTIGSISYDHPDPSIFLVLQSVSDTPGVDAIDFVIFPPRWLAMEHSFRPPWFHRNIASEFMGLIQGVYDAKAEGFVPGGASLHNCMTGHGPDAETFEKASHADTTQPHKVEATMAFMFETRGVIRPTRFAAESAQLQARYFECWQGLKKHFDPAKR.

The interval 1–26 is disordered; it reads MNMLAPAAKNAFTPASPDRPAYQSGF. The active-site Proton acceptor is H302. Fe cation contacts are provided by H345 and E351. Y360 and H381 together coordinate homogentisate. Position 381 (H381) interacts with Fe cation.

The protein belongs to the homogentisate dioxygenase family. In terms of assembly, hexamer; dimer of trimers. Fe cation is required as a cofactor.

The catalysed reaction is homogentisate + O2 = 4-maleylacetoacetate + H(+). Its pathway is amino-acid degradation; L-phenylalanine degradation; acetoacetate and fumarate from L-phenylalanine: step 4/6. Involved in the catabolism of homogentisate (2,5-dihydroxyphenylacetate or 2,5-OH-PhAc), a central intermediate in the degradation of phenylalanine and tyrosine. Catalyzes the oxidative ring cleavage of the aromatic ring of homogentisate to yield maleylacetoacetate. This chain is Homogentisate 1,2-dioxygenase, found in Ralstonia nicotianae (strain ATCC BAA-1114 / GMI1000) (Ralstonia solanacearum).